We begin with the raw amino-acid sequence, 207 residues long: Frataxin, mitochondrial (207 aa).

The transit peptide at 1–40 directs the protein to the mitochondrion; it reads MWAFGGRAAVGLLPRTASRASAWVGNPRWREPIVTCGRRG.

The protein belongs to the frataxin family. In terms of assembly, component of the mitochondrial core iron-sulfur cluster (ISC) complex composed of NFS1, LYRM4, NDUFAB1, ISCU, FXN, and FDX2; this complex is a heterohexamer containing two copies of each monomer. Homodimer. Monomer (probable predominant form). Oligomer. Monomers and polymeric aggregates of &gt;1 MDa have been isolated from mitochondria. A small fraction of heterologous overexpressed recombinant frataxin forms high-molecular weight aggregates that incorporate iron. Interacts with LYRM4. Interacts (via ferrous form) with ISCU; the interaction is possible when both are bound to the dimeric form of the cysteine desulfurase complex (NFS1:LYRM4) and the interaction enhances FXN interaction to the dimeric form of the cysteine desulfurase complex (NFS1:LYRM4). Interacts with FECH; one iron-bound FXN monomer seems to interact with a FECH homodimer. Interacts with SDHA and SDHB. Interacts with ACO2; the interaction is dependent on citrate. Interacts with HSPA9. Component of a complex composed of FXN, NFS1, LYRM4 and ISCU. As to quaternary structure, interacts with ACO1. Interacts with ISCU (cytoplasmic form). In terms of processing, processed in two steps by mitochondrial processing peptidase (MPP). MPP first cleaves the precursor to intermediate form and subsequently converts the intermediate to yield frataxin mature form (frataxin(81-210)) which is the predominant form. The additional forms, frataxin(56-210) and frataxin(78-210), seem to be produced when the normal maturation process is impaired; their physiological relevance is unsure. As to expression, heart, liver, skeletal muscle, kidney, spleen and thymus. Weakly expressed in the brain and lung.

The protein localises to the mitochondrion. The protein resides in the cytoplasm. Its subcellular location is the cytosol. It carries out the reaction 4 Fe(2+) + O2 + 4 H(+) = 4 Fe(3+) + 2 H2O. Functionally, functions as an activator of persulfide transfer to the scaffoding protein ISCU as component of the core iron-sulfur cluster (ISC) assembly complex and participates to the [2Fe-2S] cluster assembly. Accelerates sulfur transfer from NFS1 persulfide intermediate to ISCU and to small thiols such as L-cysteine and glutathione leading to persulfuration of these thiols and ultimately sulfide release. Binds ferrous ion and is released from FXN upon the addition of both L-cysteine and reduced FDX2 during [2Fe-2S] cluster assembly. The core iron-sulfur cluster (ISC) assembly complex is involved in the de novo synthesis of a [2Fe-2S] cluster, the first step of the mitochondrial iron-sulfur protein biogenesis. This process is initiated by the cysteine desulfurase complex (NFS1:LYRM4:NDUFAB1) that produces persulfide which is delivered on the scaffold protein ISCU in a FXN-dependent manner. Then this complex is stabilized by FDX2 which provides reducing equivalents to accomplish the [2Fe-2S] cluster assembly. Finally, the [2Fe-2S] cluster is transferred from ISCU to chaperone proteins, including HSCB, HSPA9 and GLRX5. May play a role in the protection against iron-catalyzed oxidative stress through its ability to catalyze the oxidation of Fe(2+) to Fe(3+); the oligomeric form but not the monomeric form has in vitro ferroxidase activity. May be able to store large amounts of iron in the form of a ferrihydrite mineral by oligomerization; however, the physiological relevance is unsure as reports are conflicting and the function has only been shown using heterologous overexpression systems. May function as an iron chaperone protein that protects the aconitase [4Fe-4S]2+ cluster from disassembly and promotes enzyme reactivation. May play a role as a high affinity iron binding partner for FECH that is capable of both delivering iron to ferrochelatase and mediating the terminal step in mitochondrial heme biosynthesis. Modulates the RNA-binding activity of ACO1. May be involved in the cytoplasmic iron-sulfur protein biogenesis. May contribute to oxidative stress resistance and overall cell survival. This Mus musculus (Mouse) protein is Frataxin, mitochondrial.